The primary structure comprises 293 residues: Nucleotide-binding protein BCQ_4976 (293 aa).

ATP is bound at residue 14 to 21 (GMSGAGKT). Residue 65–68 (DLRG) coordinates GTP.

Belongs to the RapZ-like family.

Functionally, displays ATPase and GTPase activities. The chain is Nucleotide-binding protein BCQ_4976 from Bacillus cereus (strain Q1).